Here is a 324-residue protein sequence, read N- to C-terminus: 4-hydroxybenzoyl-CoA reductase subunit beta (324 aa).

One can recognise an FAD-binding PCMH-type domain in the interval 2-217 (NILTDFRTHR…AAIEVPPTGA (216 aa)). Residues 29 to 36 (PLGAGTDL), threonine 111, asparagine 115, and glutamine 118 contribute to the FAD site. Cysteine 122, cysteine 138, cysteine 146, and cysteine 155 together coordinate [4Fe-4S] cluster. Residues aspartate 162 and lysine 224 each coordinate FAD.

As to quaternary structure, heterohexamer of two alpha, two beta and two gamma subunits. FAD serves as cofactor. Requires [4Fe-4S] cluster as cofactor.

The catalysed reaction is oxidized 2[4Fe-4S]-[ferredoxin] + benzoyl-CoA + H2O = 4-hydroxybenzoyl-CoA + reduced 2[4Fe-4S]-[ferredoxin] + 2 H(+). Its activity is regulated as follows. Inactivated by low concentrations of cyanide in vitro. Functionally, component of a complex that catalyzes the reductive dehydroxylation of 4-hydroxybenzoyl-CoA to benzoyl-CoA. Reaction is not reversible. Is a key enzyme in the anaerobic degradation of phenolic compounds. The polypeptide is 4-hydroxybenzoyl-CoA reductase subunit beta (hcrB) (Thauera aromatica).